The following is a 216-amino-acid chain: 3-keto-L-gulonate-6-phosphate decarboxylase UlaD (216 aa).

D11 provides a ligand contact to substrate. Residues E33 and D62 each coordinate Mg(2+). Residue R192 coordinates substrate.

The protein belongs to the HPS/KGPDC family. KGPDC subfamily. As to quaternary structure, homodimer. Mg(2+) serves as cofactor.

The catalysed reaction is 3-dehydro-L-gulonate 6-phosphate + H(+) = L-xylulose 5-phosphate + CO2. Its pathway is cofactor degradation; L-ascorbate degradation; D-xylulose 5-phosphate from L-ascorbate: step 2/4. Its function is as follows. Catalyzes the decarboxylation of 3-keto-L-gulonate-6-P into L-xylulose-5-P. Is involved in the anaerobic L-ascorbate utilization. The chain is 3-keto-L-gulonate-6-phosphate decarboxylase UlaD from Shigella boydii serotype 18 (strain CDC 3083-94 / BS512).